Reading from the N-terminus, the 913-residue chain is Eukaryotic translation initiation factor 3 subunit C (913 aa).

The tract at residues 1–44 (MSRFFTTGSDSESESSLSGEELVTKPVGGNYGKQPLLLSEDEED) is disordered. Positions 8–21 (GSDSESESSLSGEE) are enriched in low complexity. Residues Ser-9, Ser-11, Ser-13, Ser-15, Ser-16, Ser-18, and Ser-39 each carry the phosphoserine modification. Lys-99 bears the N6-acetyllysine mark. 2 disordered regions span residues 157-301 (TSYK…GGEW) and 522-542 (QLTPPEGSSKSEQDQAENEGE). Ser-166, Ser-178, Ser-181, and Ser-182 each carry phosphoserine. Acidic residues predominate over residues 166 to 190 (SADEDAEKNEEDSEGSSDEDEDEDG). The segment covering 199-216 (KKSEAPSGESRKFLKKMD) has biased composition (basic and acidic residues). Positions 217–232 (DEDEDSEDSEDDEDWD) are enriched in acidic residues. Basic and acidic residues predominate over residues 261–278 (PTTDEDKKAAEKKREDKA). The span at 522 to 531 (QLTPPEGSSK) shows a compositional bias: polar residues. Residue Thr-524 is modified to Phosphothreonine. Lys-643 carries the post-translational modification N6-acetyllysine. In terms of domain architecture, PCI spans 673–849 (FHLHINLELL…QTVVMHRTEP (177 aa)). A disordered region spans residues 885 to 913 (FRDQKDGYRKNEGYMRRGGYRQQQSQTAY). Over residues 886-899 (RDQKDGYRKNEGYM) the composition is skewed to basic and acidic residues. Residue Ser-909 is modified to Phosphoserine.

It belongs to the eIF-3 subunit C family. As to quaternary structure, component of the eukaryotic translation initiation factor 3 (eIF-3) complex, which is composed of 13 subunits: EIF3A, EIF3B, EIF3C, EIF3D, EIF3E, EIF3F, EIF3G, EIF3H, EIF3I, EIF3J, EIF3K, EIF3L and EIF3M. The eIF-3 complex appears to include 3 stable modules: module A is composed of EIF3A, EIF3B, EIF3G and EIF3I; module B is composed of EIF3F, EIF3H, and EIF3M; and module C is composed of EIF3C, EIF3D, EIF3E, EIF3K and EIF3L. EIF3C of module C binds EIF3B of module A and EIF3H of module B, thereby linking the three modules. EIF3J is a labile subunit that binds to the eIF-3 complex via EIF3B. The eIF-3 complex interacts with RPS6KB1 under conditions of nutrient depletion. Mitogenic stimulation leads to binding and activation of a complex composed of MTOR and RPTOR, leading to phosphorylation and release of RPS6KB1 and binding of EIF4B to eIF-3. Interacts with ALKBH4, IFIT1 and IFIT2. Interacts with BZW2/5MP1. Post-translationally, phosphorylated. Phosphorylation is enhanced upon serum stimulation.

It is found in the cytoplasm. Functionally, component of the eukaryotic translation initiation factor 3 (eIF-3) complex, which is required for several steps in the initiation of protein synthesis. The eIF-3 complex associates with the 40S ribosome and facilitates the recruitment of eIF-1, eIF-1A, eIF-2:GTP:methionyl-tRNAi and eIF-5 to form the 43S pre-initiation complex (43S PIC). The eIF-3 complex stimulates mRNA recruitment to the 43S PIC and scanning of the mRNA for AUG recognition. The eIF-3 complex is also required for disassembly and recycling of post-termination ribosomal complexes and subsequently prevents premature joining of the 40S and 60S ribosomal subunits prior to initiation. The eIF-3 complex specifically targets and initiates translation of a subset of mRNAs involved in cell proliferation, including cell cycling, differentiation and apoptosis, and uses different modes of RNA stem-loop binding to exert either translational activation or repression. The sequence is that of Eukaryotic translation initiation factor 3 subunit C from Pongo abelii (Sumatran orangutan).